A 119-amino-acid chain; its full sequence is Ribonuclease P protein component (119 aa).

This sequence belongs to the RnpA family. In terms of assembly, consists of a catalytic RNA component (M1 or rnpB) and a protein subunit.

It carries out the reaction Endonucleolytic cleavage of RNA, removing 5'-extranucleotides from tRNA precursor.. Its function is as follows. RNaseP catalyzes the removal of the 5'-leader sequence from pre-tRNA to produce the mature 5'-terminus. It can also cleave other RNA substrates such as 4.5S RNA. The protein component plays an auxiliary but essential role in vivo by binding to the 5'-leader sequence and broadening the substrate specificity of the ribozyme. The protein is Ribonuclease P protein component of Bacillus cereus (strain ZK / E33L).